The sequence spans 820 residues: Potassium channel GORK (820 aa).

The Cytoplasmic portion of the chain corresponds to 1 to 69 (MGRLRRRQEI…PKNRWYKAWE (69 aa)). The helical transmembrane segment at 70-90 (MFILVWAIYSSLFTPMEFGFF) threads the bilayer. Residues 91-97 (RGLPERL) are Extracellular-facing. The chain crosses the membrane as a helical span at residues 98–118 (FVLDIVGQIAFLVDIVLQFFV). At 119 to 141 (AYRDTQTYRTVYKPTRIAFRYLK) the chain is on the cytoplasmic side. The chain crosses the membrane as a helical span at residues 142 to 162 (SHFLMDFIGCFPWDLIYKASG). The Extracellular portion of the chain corresponds to 163 to 168 (KHELVR). The helical; Voltage-sensor transmembrane segment at 169–189 (YLLWIRLFRVRKVVEFFQRLE) threads the bilayer. The Cytoplasmic portion of the chain corresponds to 190 to 203 (KDTRINYLFTRILK). A helical transmembrane segment spans residues 204–224 (LLFVEVYCTHTAACIFYYLAT). Topologically, residues 225-259 (TLPPENEGYTWIGSLKLGDYSYENFREIDLWKRYT) are extracellular. The segment at residues 260–279 (TALYFAIVTMATVGYGDIHA) is an intramembrane region (pore-forming). Topologically, residues 280–285 (VNLREM) are extracellular. The chain crosses the membrane as a helical span at residues 286 to 306 (IFVMIYVSFDMVLGAYLIGNI). Residues 307-820 (TALIVKGSNT…YMISDTTDQT (514 aa)) lie on the Cytoplasmic side of the membrane. A nucleoside 3',5'-cyclic phosphate is bound at residue 386–508 (LFKGCSTEFI…ILNNIMEEKE (123 aa)). ANK repeat units follow at residues 528–559 (EAEL…DPNK), 563–592 (DGRS…DVNL), 596–625 (FGHT…SFNL), 627–656 (DSGN…NPNS), 660–689 (DHRT…SVIS), and 693–722 (WGNS…AQSS). Positions 740–820 (KCTVFPFHPQ…YMISDTTDQT (81 aa)) constitute a KHA domain.

It belongs to the potassium channel family. Plant (TC 1.A.1.4) subfamily. The potassium channel is probably composed of a homo- or heterotetrameric complex of pore-forming subunits. In terms of tissue distribution, expressed in guard cell-containing tissues, in root epidermal cells and in root hairs. Detected in vascular cells of the root and shoot.

It localises to the membrane. In terms of biological role, major selective outward-rectifying potassium channel of the guard cell membrane. Involved in regulation of stomatal movements according to the water status. Assuming opened or closed conformations in response to the voltage difference across the membrane, the channel is activated by depolarization. Conductance of the channel is modulated in a potassium-dependent fashion. May interact with the cytoskeleton or with regulatory proteins. The polypeptide is Potassium channel GORK (GORK) (Arabidopsis thaliana (Mouse-ear cress)).